We begin with the raw amino-acid sequence, 220 residues long: CASP-like protein 4B1 (220 aa).

Topologically, residues 1–74 (MAMVTTEAAA…RWRREDMLDK (74 aa)) are cytoplasmic. The tract at residues 13-56 (TTAATAAAEKPQDVEKPDYAPYNGASTTADGGTGARARRGDGGG) is disordered. Residues 75–95 (SPLALHAAAAIFAFVALVLVA) traverse the membrane as a helical segment. Residues 96-109 (SNQHGDWMQFDRYQ) lie on the Extracellular side of the membrane. A helical membrane pass occupies residues 110–127 (EYRYLLAIASLALLYSLA). Over 128 to 152 (QAARHAHRMRGGVDPVSSASARLLD) the chain is Cytoplasmic. A helical membrane pass occupies residues 153–173 (FVGDQVVAYLLMSALSAAVPI). At 174-188 (TNRMRSAVVNNFTDA) the chain is on the extracellular side. Residue Asn184 is glycosylated (N-linked (GlcNAc...) asparagine). A helical transmembrane segment spans residues 189–209 (TAAAISMAFFSFVALALSAVV). Over 210–220 (SGYKLSKQTYM) the chain is Cytoplasmic.

This sequence belongs to the Casparian strip membrane proteins (CASP) family. In terms of assembly, homodimer and heterodimers.

The protein localises to the cell membrane. The protein is CASP-like protein 4B1 of Sorghum bicolor (Sorghum).